A 99-amino-acid polypeptide reads, in one-letter code: Putative type 4B encapsulin shell protein PF1875 (99 aa).

Belongs to the encapsulin family. Family 4B subfamily. In terms of assembly, may self-assemble into facets and potentially into larger complexes.

It is found in the encapsulin nanocompartment. Its function is as follows. May be the encapsulin shell protein in a type 4 A-domain encapsulin nanocompartment system. Its cargo may be upstream glyceraldehyde-3-phosphate dehydrogenase (AC P61879). This Pyrococcus furiosus (strain ATCC 43587 / DSM 3638 / JCM 8422 / Vc1) protein is Putative type 4B encapsulin shell protein PF1875.